The sequence spans 790 residues: Cadherin-18 (790 aa).

An N-terminal signal peptide occupies residues 1–24 (MKITSTSCICPVLVCLCFVQRCYG). Residues 25-53 (TTHHGSIRGTRNQTKHIEGETEVHHRPKR) constitute a propeptide that is removed on maturation. Residue asparagine 36 is glycosylated (N-linked (GlcNAc...) asparagine). 5 consecutive Cadherin domains span residues 54 to 159 (GWVW…APKF), 160 to 268 (TDGP…PPRF), 269 to 383 (PQKH…PPLF), 384 to 486 (SMPS…DNPP), and 487 to 608 (ELAR…FLSS). Residues 54–608 (GWVWNQFFVL…TCHAEAFLSS (555 aa)) lie on the Extracellular side of the membrane. Asparagine 255 carries N-linked (GlcNAc...) asparagine glycosylation. Asparagine 455 and asparagine 536 each carry an N-linked (GlcNAc...) asparagine glycan. Residues 609-636 (AGLSTGALIAILLCVVILLAIVVLFITL) form a helical membrane-spanning segment. Residues 637–790 (RRSKKEPLII…YGEIESERTT (154 aa)) are Cytoplasmic-facing. Position 786 is a phosphoserine (serine 786).

It is found in the cell membrane. Functionally, cadherins are calcium-dependent cell adhesion proteins. They preferentially interact with themselves in a homophilic manner in connecting cells; cadherins may thus contribute to the sorting of heterogeneous cell types. This Bos taurus (Bovine) protein is Cadherin-18 (CDH18).